A 403-amino-acid polypeptide reads, in one-letter code: Metacaspase-7 (403 aa).

Catalysis depends on residues histidine 86 and cysteine 139. Cysteine 139 carries the post-translational modification S-nitrosocysteine.

This sequence belongs to the peptidase C14B family. Post-translationally, proteolytically processed; by an autocatalytic mechanism. As to expression, expressed in roots, flowers and siliques.

In Arabidopsis thaliana (Mouse-ear cress), this protein is Metacaspase-7 (AMC7).